Here is a 490-residue protein sequence, read N- to C-terminus: JNK-interacting protein 1 (490 aa).

Disordered regions lie at residues 1 to 71 (MADS…DHEP) and 213 to 254 (EDSS…PVSQ). Residues 231–249 (GHSTAHSPNDFKSMSPQIT) are compositionally biased toward polar residues. The 62-residue stretch at 271-332 (MLEATHRGLH…PSAYAVDLDY (62 aa)) folds into the SH3 domain. Residues 344 to 479 (KERYLLGYLG…FQRFYQKFIE (136 aa)) form the PID domain.

Belongs to the JIP scaffold family. Forms homo- and heterooligomeric complexes. Binds Hep, a dual specificity protein kinase in the JNK pathway, but not its downstream target bsk. The C-terminal region interacts with the kinesin light chain protein, Klc, and the C-terminal PTY motif of amyloid-beta protein precursor-like protein, Appl. Expressed in the brain, CNS, PNS and cells posterior to the morphogenetic furrow in the eye imaginal disk of late embryos.

It is found in the cytoplasm. The JNK-interacting protein (JIP) group of scaffold proteins selectively mediates JNK signaling by aggregating specific components of the MAPK cascade to form a functional JNK signaling module. May function as a regulator of vesicle transport, through interactions with the JNK-signaling components and motor proteins. This chain is JNK-interacting protein 1 (Aplip1), found in Drosophila melanogaster (Fruit fly).